Consider the following 168-residue polypeptide: Endoribonuclease YbeY (168 aa).

The Zn(2+) site is built by His132, His136, and His142.

This sequence belongs to the endoribonuclease YbeY family. Requires Zn(2+) as cofactor.

The protein localises to the cytoplasm. Its function is as follows. Single strand-specific metallo-endoribonuclease involved in late-stage 70S ribosome quality control and in maturation of the 3' terminus of the 16S rRNA. In Clostridium perfringens (strain ATCC 13124 / DSM 756 / JCM 1290 / NCIMB 6125 / NCTC 8237 / Type A), this protein is Endoribonuclease YbeY.